The following is a 57-amino-acid chain: UPF0391 membrane protein RPE_2138 (57 aa).

2 helical membrane-spanning segments follow: residues 4-24 (WVVT…GGIA) and 30-50 (IAKI…VIGL).

The protein belongs to the UPF0391 family.

Its subcellular location is the cell membrane. This Rhodopseudomonas palustris (strain BisA53) protein is UPF0391 membrane protein RPE_2138.